The following is an 817-amino-acid chain: B lymphocyte-induced maturation protein 1 homolog (817 aa).

The disordered stretch occupies residues 1 to 62 (MGQGSGDDGV…PAGVSASGAR (62 aa)). The span at 15–61 (FSSAAAAAHSPPHSPLSVGVSSASSATSSSSTPPSSTSPAGVSASGA) shows a compositional bias: low complexity. The SET domain maps to 103-241 (MNLILKSSSK…ANTELSFWFS (139 aa)). 4 C2H2-type zinc fingers span residues 508-530 (YACK…VRTH), 536-558 (FKCE…HLVH), 564-586 (HRCD…LRLH), and 592-614 (YTCD…KRLH). The C2H2-type 5; degenerate zinc finger occupies 620 to 642 (YSCGTCGKKYISPSGLRTHWKTT). The tract at residues 709–817 (LLGQGPSGMQ…LPSLGLPHYP (109 aa)) is disordered. A compositionally biased stretch (low complexity) spans 779–794 (QGGPSSGSGQQQHPQH).

Interacts with dre-1; the interaction targets blmp-1 for proteasomal degradation. Interacts with ldb-1 and ham-3. Post-translationally, ubiquitinated by the SCF(dre-1) complex, leading to its degradation by the proteasome. As to expression, expressed in hypodermal, vulval, intestinal and distal tip cells.

It localises to the nucleus. The protein resides in the cytoplasm. Transcription factor which binds to enhancer elements in the promoter region of genes. Regulates the expression of the transcription factor bed-3 to control vulval development. Promotes terminal differentiation in the hypodermis and is involved in regulation of gonadal outgrowth and entry into the dauer stage. Regulates the timing of dorsalward migration of the distal tip cells of the hermaphrodite gonad by inhibiting precocious unc-5 and lin-29 expression which in turn prevents early dorsalward turning. Plays a role in male tail tip morphogenesis. This is B lymphocyte-induced maturation protein 1 homolog from Caenorhabditis elegans.